Reading from the N-terminus, the 185-residue chain is MAEEKQTPRMKTRYFEVIRKTLQEKFNYKNAMQIPRVDKVVVNMGIGEATIDSKRPSLAAEDLGLITGQKAVVTRARNSIATFKVREGMPLGAKVTLRKDRMFEFLDRLVTIALPRVRDFRGLNPKSFDGRGNFAMGIKEHIVFPEINYDKVDQIWGMDIIVCTTAKTDDEARELLRAFNFPFRS.

The protein belongs to the universal ribosomal protein uL5 family. Part of the 50S ribosomal subunit; part of the 5S rRNA/L5/L18/L25 subcomplex. Contacts the 5S rRNA and the P site tRNA. Forms a bridge to the 30S subunit in the 70S ribosome.

This is one of the proteins that bind and probably mediate the attachment of the 5S RNA into the large ribosomal subunit, where it forms part of the central protuberance. In the 70S ribosome it contacts protein S13 of the 30S subunit (bridge B1b), connecting the 2 subunits; this bridge is implicated in subunit movement. Contacts the P site tRNA; the 5S rRNA and some of its associated proteins might help stabilize positioning of ribosome-bound tRNAs. The polypeptide is Large ribosomal subunit protein uL5 (Bartonella quintana (strain Toulouse) (Rochalimaea quintana)).